The following is a 247-amino-acid chain: (7aS)-7a-methyl-1,5-dioxo-2,3,5,6,7,7a-hexahydro-1H-indene-carboxyl-CoA hydrolase (247 aa).

It belongs to the enoyl-CoA hydratase/isomerase family.

It catalyses the reaction (7aS)-7a-methyl-1,5-dioxo-2,3,5,6,7,7a-hexahydro-1H-indene-carboxyl-CoA + H2O = (3E)-2-(2-carboxylatoethyl)-3-methyl-6-oxocyclohex-1-ene-1-carboxyl-CoA + H(+). It functions in the pathway steroid metabolism; cholesterol degradation. Its function is as follows. Involved in the final steps of cholesterol and steroid degradation. Catalyzes the hydrolytic ring D opening of (7aS)-7a-methyl-1,5-dioxo-2,3,5,6,7,7a-hexahydro-1H-indene-carboxyl-CoA (HIEC-CoA) to (3E)-2-(2-carboxylatoethyl)-3-methyl-6-oxocyclohex-1-ene-1-carboxyl-CoA (COCHEA-CoA). The polypeptide is (7aS)-7a-methyl-1,5-dioxo-2,3,5,6,7,7a-hexahydro-1H-indene-carboxyl-CoA hydrolase (Mycobacterium tuberculosis (strain ATCC 25618 / H37Rv)).